The sequence spans 475 residues: Phosphoglucosamine mutase (475 aa).

The Phosphoserine intermediate role is filled by Ser-126. Positions 126, 265, 267, and 269 each coordinate Mg(2+). Ser-126 carries the post-translational modification Phosphoserine.

It belongs to the phosphohexose mutase family. The cofactor is Mg(2+). Activated by phosphorylation.

The catalysed reaction is alpha-D-glucosamine 1-phosphate = D-glucosamine 6-phosphate. Its function is as follows. Catalyzes the conversion of glucosamine-6-phosphate to glucosamine-1-phosphate. This chain is Phosphoglucosamine mutase, found in Synechococcus sp. (strain ATCC 27144 / PCC 6301 / SAUG 1402/1) (Anacystis nidulans).